A 402-amino-acid chain; its full sequence is Sulfate adenylyltransferase (402 aa).

The protein belongs to the sulfate adenylyltransferase family.

The catalysed reaction is sulfate + ATP + H(+) = adenosine 5'-phosphosulfate + diphosphate. The protein operates within sulfur metabolism; hydrogen sulfide biosynthesis; sulfite from sulfate: step 1/3. The chain is Sulfate adenylyltransferase from Vesicomyosocius okutanii subsp. Calyptogena okutanii (strain HA).